The following is a 109-amino-acid chain: T cell receptor alpha variable 25 (109 aa).

An N-terminal signal peptide occupies residues 1–19 (MLLITSMLVLWMQLSQVNG). Residues 20 to 109 (QQVMQIPQYQ…TDVGTYFCAG (90 aa)) enclose the Ig-like domain. Residues C41 and C107 are joined by a disulfide bond. N-linked (GlcNAc...) asparagine glycosylation is found at N42 and N89.

In terms of assembly, alpha-beta TR is a heterodimer composed of an alpha and beta chain; disulfide-linked. The alpha-beta TR is associated with the transmembrane signaling CD3 coreceptor proteins to form the TR-CD3 (TcR or TCR). The assembly of alpha-beta TR heterodimers with CD3 occurs in the endoplasmic reticulum where a single alpha-beta TR heterodimer associates with one CD3D-CD3E heterodimer, one CD3G-CD3E heterodimer and one CD247 homodimer forming a stable octameric structure. CD3D-CD3E and CD3G-CD3E heterodimers preferentially associate with TR alpha and TR beta chains, respectively. The association of the CD247 homodimer is the last step of TcR assembly in the endoplasmic reticulum and is required for transport to the cell surface.

It is found in the cell membrane. Functionally, v region of the variable domain of T cell receptor (TR) alpha chain that participates in the antigen recognition. Alpha-beta T cell receptors are antigen specific receptors which are essential to the immune response and are present on the cell surface of T lymphocytes. Recognize peptide-major histocompatibility (MH) (pMH) complexes that are displayed by antigen presenting cells (APC), a prerequisite for efficient T cell adaptive immunity against pathogens. Binding of alpha-beta TR to pMH complex initiates TR-CD3 clustering on the cell surface and intracellular activation of LCK that phosphorylates the ITAM motifs of CD3G, CD3D, CD3E and CD247 enabling the recruitment of ZAP70. In turn ZAP70 phosphorylates LAT, which recruits numerous signaling molecules to form the LAT signalosome. The LAT signalosome propagates signal branching to three major signaling pathways, the calcium, the mitogen-activated protein kinase (MAPK) kinase and the nuclear factor NF-kappa-B (NF-kB) pathways, leading to the mobilization of transcription factors that are critical for gene expression and essential for T cell growth and differentiation. The T cell repertoire is generated in the thymus, by V-(D)-J rearrangement. This repertoire is then shaped by intrathymic selection events to generate a peripheral T cell pool of self-MH restricted, non-autoaggressive T cells. Post-thymic interaction of alpha-beta TR with the pMH complexes shapes TR structural and functional avidity. The chain is T cell receptor alpha variable 25 from Homo sapiens (Human).